The primary structure comprises 701 residues: Methionine--tRNA ligase (701 aa).

A 'HIGH' region motif is present at residues 13–23 (PYANGSIHLGH). Cys144, Cys147, Cys157, and Cys160 together coordinate Zn(2+). The short motif at 336 to 340 (KMSKS) is the 'KMSKS' region element. ATP is bound at residue Lys339. The tRNA-binding domain maps to 600-701 (DFSKIDLRIA…SGAQPGMRVK (102 aa)).

This sequence belongs to the class-I aminoacyl-tRNA synthetase family. MetG type 1 subfamily. In terms of assembly, homodimer. It depends on Zn(2+) as a cofactor.

Its subcellular location is the cytoplasm. It catalyses the reaction tRNA(Met) + L-methionine + ATP = L-methionyl-tRNA(Met) + AMP + diphosphate. Is required not only for elongation of protein synthesis but also for the initiation of all mRNA translation through initiator tRNA(fMet) aminoacylation. This Nitrosomonas eutropha (strain DSM 101675 / C91 / Nm57) protein is Methionine--tRNA ligase.